The chain runs to 814 residues: Transcription activator of gluconeogenesis PADG_03802 (814 aa).

The segment at 1–90 (MTSSARNGSP…SAKDPLRPRR (90 aa)) is disordered. Low complexity predominate over residues 69 to 83 (STSSTAASANNASAK). The segment at residues 97 to 125 (CFACQRAHLTCGDERPCQRCIKRGLQDTC) is a DNA-binding region (zn(2)-C6 fungal-type). Disordered stretches follow at residues 164–208 (NTNS…TNNY), 236–287 (SAFQ…PTFF), 323–384 (AGDT…SRNI), 442–461 (PPTN…STPS), 598–617 (TGGS…YNSR), and 695–739 (SAAG…ATNV). Residues 171 to 188 (NGTNSNSDNNSTNTNSNN) are compositionally biased toward low complexity. Composition is skewed to polar residues over residues 189–208 (KPSH…TNNY), 248–279 (FDLS…SQNP), 339–359 (GRSS…NQSP), and 375–384 (GQGQTNSRNI). Positions 442-451 (PPTNTQHQQQ) are enriched in low complexity. The segment covering 720–739 (GTTSAVNGVSNGSGNNATNV) has biased composition (low complexity).

Belongs to the ERT1/acuK family.

Its subcellular location is the nucleus. Transcription factor which regulates nonfermentable carbon utilization. Activator of gluconeogenetic genes. The chain is Transcription activator of gluconeogenesis PADG_03802 from Paracoccidioides brasiliensis (strain Pb18).